The primary structure comprises 189 residues: MKNVSPSYLKHHFLIAMPHMADPNFAQTLTYIVEHNASGAMGLVVNRPQDLNLADILEQLRPDQEPSLLCQHVPIFSGGPVQTDRGFVLHPNGPVYQATVELEGLSLSTSQDVLFAIADGVGPAKSLIALGYAGWEAGQLEAELADNAWLTCPFDADILFNTSSELRLEAAARHLGVNLSLLTSQAGHA.

Belongs to the UPF0301 (AlgH) family.

The sequence is that of UPF0301 protein PFL_5830 from Pseudomonas fluorescens (strain ATCC BAA-477 / NRRL B-23932 / Pf-5).